Consider the following 762-residue polypeptide: Putative BTB/POZ domain-containing protein L272 (762 aa).

Residues 16-86 (TDITIILKDE…FYGQKIKSHN (71 aa)) enclose the BTB domain. Positions 390–410 (DLDNSNDLNDSNDLDDSDDSN) are enriched in acidic residues. Disordered stretches follow at residues 390–411 (DLDN…DSND) and 532–556 (ISDN…NSDN). Positions 532–543 (ISDNSDNLNNSD) are enriched in low complexity. A coiled-coil region spans residues 737–762 (FSENYCDELINRLNNALKKIEQKYPN).

Belongs to the mimivirus BTB/WD family.

The polypeptide is Putative BTB/POZ domain-containing protein L272 (Acanthamoeba polyphaga (Amoeba)).